Consider the following 304-residue polypeptide: Carnitine monooxygenase reductase subunit (304 aa).

Residues 1-93 (MEQLTPLIKR…SEPKNLFPLA (93 aa)) form the FAD-binding FR-type domain. The region spanning 219-304 (FTVVLAKSNQ…AKGKKLVLDL (86 aa)) is the 2Fe-2S ferredoxin-type domain. Residues cysteine 253, cysteine 258, cysteine 261, and cysteine 291 each coordinate [2Fe-2S] cluster.

It belongs to the PDR/VanB family. CntB subfamily. In terms of assembly, composed of an oxygenase subunit and a reductase subunit. Requires FMN as cofactor. The cofactor is [2Fe-2S] cluster.

It catalyses the reaction (R)-carnitine + NADH + O2 + H(+) = (3R)-3-hydroxy-4-oxobutanoate + trimethylamine + NAD(+) + H2O. The enzyme catalyses (R)-carnitine + NADPH + O2 + H(+) = (3R)-3-hydroxy-4-oxobutanoate + trimethylamine + NADP(+) + H2O. The protein operates within amine and polyamine metabolism; carnitine metabolism. Its activity is regulated as follows. Inhibited by EDTA. Its function is as follows. Converts carnitine to trimethylamine and malic semialdehyde. Acts on both enantiomers. This Acinetobacter pittii (strain PHEA-2) protein is Carnitine monooxygenase reductase subunit.